Reading from the N-terminus, the 459-residue chain is Putrescine aminotransferase (459 aa).

Pyridoxal 5'-phosphate-binding positions include 150-151 (GT) and Gln274. At Lys300 the chain carries N6-(pyridoxal phosphate)lysine. Thr332 provides a ligand contact to pyridoxal 5'-phosphate.

Belongs to the class-III pyridoxal-phosphate-dependent aminotransferase family. Putrescine aminotransferase subfamily. Requires pyridoxal 5'-phosphate as cofactor.

It catalyses the reaction an alkane-alpha,omega-diamine + 2-oxoglutarate = an omega-aminoaldehyde + L-glutamate. It carries out the reaction putrescine + 2-oxoglutarate = 1-pyrroline + L-glutamate + H2O. The catalysed reaction is cadaverine + 2-oxoglutarate = 5-aminopentanal + L-glutamate. Its pathway is amine and polyamine degradation; putrescine degradation; 4-aminobutanal from putrescine (transaminase route): step 1/1. Its function is as follows. Catalyzes the aminotransferase reaction from putrescine to 2-oxoglutarate, leading to glutamate and 4-aminobutanal, which spontaneously cyclizes to form 1-pyrroline. This is the first step in one of two pathways for putrescine degradation, where putrescine is converted into 4-aminobutanoate (gamma-aminobutyrate or GABA) via 4-aminobutanal. Also functions as a cadaverine transaminase in a a L-lysine degradation pathway to succinate that proceeds via cadaverine, glutarate and L-2-hydroxyglutarate. This chain is Putrescine aminotransferase, found in Klebsiella pneumoniae (strain 342).